Consider the following 123-residue polypeptide: Galanin peptides (123 aa).

A signal peptide spans 1–19 (MPRGSVLLLASLLLAAALS). Residues 20 to 30 (ATLGLGSPVKE) constitute a propeptide that is removed on maturation. Over residues 53–66 (SFQDKHGLAGKREL) the composition is skewed to basic and acidic residues. The tract at residues 53-79 (SFQDKHGLAGKRELEPEDEARPGSFDR) is disordered. Residue Ala-61 is modified to Alanine amide. Position 116 is a phosphoserine (Ser-116).

It belongs to the galanin family.

It is found in the secreted. Functionally, endocrine hormone of the central and peripheral nervous systems that binds and activates the G protein-coupled receptors GALR1, GALR2, and GALR3. This small neuropeptide may regulate diverse physiologic functions including contraction of smooth muscle of the gastrointestinal and genitourinary tract, growth hormone and insulin release and adrenal secretion. The sequence is that of Galanin peptides (GAL) from Bos taurus (Bovine).